Here is a 667-residue protein sequence, read N- to C-terminus: MKQKKNRFGSGKRITDQSSVDGDLIAPGNSSMDKRRNSSSSRSSSTQESKELTESLASVHTSDMHQSNIHERIDGDDNPFLDQDDESFKSTRANTSATKLTDVVNPNAEYKDNDSDNDEEILTATAPDTSITEGIVSTEADGGNDVVTASVEDKEGTVTDTAVGLDNANNTVDQKVKESIIPDIKLINDRVQILEANKVSEGQGRAYVAYTIKWGDQSVRRRYSDFESLRSVLMKLFPTSLLPPIPEKQTLKNYSKSIAGSKSNYLLPSEGTGSVDLVLSVINGTVTNNDEKLIRHRIRMLTSFLNKLLQDEEILKTPIIYDFLDPNNINWNDFINSSATFSMLPKSVLQCNPLDPTNTTRIHACLPVPSTSHILPSKEKVSDTKTIERKDGFDIIEQEHKQYESLLKSGFYKHNTQITKSLYGMQHDMKDLSDTFAHFASAQACEAELAEQLTYMSNAYDDAASNLEALVGLLYYNINEPLGESVRMAGSAKELIKYRKLKGVQLEILINSLESKRQQLHKLELQRGVQPRNGNTASGASGNDESSVKKPQASKSQSSSYGGKFLNRFNKIAAMVKETINYQEQDPQTTMANLIKEIEQLNESEQVARHDLEDISKIIKEDRLTKFSEEREKELNEILRNYSKYLKDYAKKNLELWKEIKTRQEQL.

The tract at residues 1-94 (MKQKKNRFGS…DESFKSTRAN (94 aa)) is disordered. Over residues 38-47 (SSSSRSSSTQ) the composition is skewed to low complexity. Over residues 55 to 67 (SLASVHTSDMHQS) the composition is skewed to polar residues. Acidic residues predominate over residues 76 to 85 (DDNPFLDQDD). The 147-residue stretch at 185 to 331 (KLINDRVQIL…DFLDPNNINW (147 aa)) folds into the PX domain. A 1,2-diacyl-sn-glycero-3-phospho-(1D-myo-inositol-3-phosphate) is bound by residues R222, S224, K248, and R297. Residues 524–562 (ELQRGVQPRNGNTASGASGNDESSVKKPQASKSQSSSYG) form a disordered region. A compositionally biased stretch (polar residues) spans 532-545 (RNGNTASGASGNDE). A compositionally biased stretch (low complexity) spans 549–560 (KKPQASKSQSSS). Residues 588-652 (QTTMANLIKE…SKYLKDYAKK (65 aa)) adopt a coiled-coil conformation.

This sequence belongs to the sorting nexin family.

The protein resides in the endosome membrane. It localises to the preautophagosomal structure membrane. Required for cytoplasm to vacuole transport (Cvt), pexophagy and mitophagy. Also involved in endoplasmic reticulum-specific autophagic process and is essential for the survival of cells subjected to severe ER stress. Functions in protein retrieval from the endocytic pathway. The sequence is that of Autophagy-related protein 20 (ATG20) from Vanderwaltozyma polyspora (strain ATCC 22028 / DSM 70294 / BCRC 21397 / CBS 2163 / NBRC 10782 / NRRL Y-8283 / UCD 57-17) (Kluyveromyces polysporus).